A 40-amino-acid polypeptide reads, in one-letter code: MTNTTGRVPLWLVGTVAGTLVIGLLGVFFYGAYSGLGSSL.

A helical transmembrane segment spans residues 10–30 (LWLVGTVAGTLVIGLLGVFFY).

This sequence belongs to the PsbJ family. In terms of assembly, PSII is composed of 1 copy each of membrane proteins PsbA, PsbB, PsbC, PsbD, PsbE, PsbF, PsbH, PsbI, PsbJ, PsbK, PsbL, PsbM, PsbT, PsbX, PsbY, PsbZ, Psb30/Ycf12, at least 3 peripheral proteins of the oxygen-evolving complex and a large number of cofactors. It forms dimeric complexes.

The protein resides in the plastid. The protein localises to the chloroplast thylakoid membrane. Functionally, one of the components of the core complex of photosystem II (PSII). PSII is a light-driven water:plastoquinone oxidoreductase that uses light energy to abstract electrons from H(2)O, generating O(2) and a proton gradient subsequently used for ATP formation. It consists of a core antenna complex that captures photons, and an electron transfer chain that converts photonic excitation into a charge separation. This Adiantum capillus-veneris (Maidenhair fern) protein is Photosystem II reaction center protein J.